Reading from the N-terminus, the 465-residue chain is Cruciform DNA-recognizing protein 1 (465 aa).

Disordered regions lie at residues 107 to 227 (EAGG…VPNP) and 247 to 276 (RLNK…ALPQ). Residues 127-151 (NRKKNKRNNKKRRSKLKKKSTKNNK) show a composition bias toward basic residues. Phosphoserine is present on residues S153 and S156. Residues 156-165 (SLDDNEEEDG) show a composition bias toward acidic residues. Residues 160–161 (NE) are X-DNA-binding. The span at 166 to 177 (VTGTTTEDVTGT) shows a compositional bias: low complexity. T182 carries the post-translational modification Phosphothreonine. Position 271 is a phosphoserine (S271). The residue at position 295 (T295) is a Phosphothreonine. Residues 300–465 (AVTPLINEPE…FFGKLKKLFK (166 aa)) form a disordered region. 2 positions are modified to phosphoserine: S319 and S343. Over residues 337–363 (LVEKRESTEGVLDGSKKVENKAKKDEE) the composition is skewed to basic and acidic residues. Position 366 is a phosphothreonine (T366). Basic and acidic residues-rich tracts occupy residues 385–398 (AEGR…EEKE) and 404–428 (EKGS…EVKK). The residue at position 394 (S394) is a Phosphoserine. Position 440 is a phosphoserine (S440). Positions 451–465 (KKKTGFFGKLKKLFK) are enriched in basic residues.

This sequence belongs to the CRP1/MDG1 family. Post-translationally, cleaved in the vicinity of position 160 to give an X-DNA-binding N-terminal subpeptide and a non-DNA-binding C-terminal subpeptide.

Functionally, cruciform DNA-binding protein which exerts an enhancing effect on the cleavage of cruciform DNA (X-DNA) by endonuclease VII from bacteriophage T4. This Saccharomyces cerevisiae (strain ATCC 204508 / S288c) (Baker's yeast) protein is Cruciform DNA-recognizing protein 1 (CRP1).